Reading from the N-terminus, the 302-residue chain is Aspartate carbamoyltransferase catalytic subunit (302 aa).

2 residues coordinate carbamoyl phosphate: Arg-51 and Thr-52. L-aspartate is bound at residue Lys-80. Carbamoyl phosphate is bound by residues Arg-101, His-129, and Gln-132. L-aspartate is bound by residues Arg-162 and Arg-223. Leu-261 and Pro-262 together coordinate carbamoyl phosphate.

The protein belongs to the aspartate/ornithine carbamoyltransferase superfamily. ATCase family. Heterododecamer (2C3:3R2) of six catalytic PyrB chains organized as two trimers (C3), and six regulatory PyrI chains organized as three dimers (R2).

It carries out the reaction carbamoyl phosphate + L-aspartate = N-carbamoyl-L-aspartate + phosphate + H(+). It functions in the pathway pyrimidine metabolism; UMP biosynthesis via de novo pathway; (S)-dihydroorotate from bicarbonate: step 2/3. Catalyzes the condensation of carbamoyl phosphate and aspartate to form carbamoyl aspartate and inorganic phosphate, the committed step in the de novo pyrimidine nucleotide biosynthesis pathway. This chain is Aspartate carbamoyltransferase catalytic subunit, found in Chromobacterium violaceum (strain ATCC 12472 / DSM 30191 / JCM 1249 / CCUG 213 / NBRC 12614 / NCIMB 9131 / NCTC 9757 / MK).